A 165-amino-acid polypeptide reads, in one-letter code: uncharacterized protein (165 aa).

This is an uncharacterized protein from Homo sapiens (Human).